Reading from the N-terminus, the 341-residue chain is Glycerol-1-phosphate dehydrogenase [NAD(P)+] (341 aa).

NAD(+) is bound by residues 81–85 (GKAID) and 103–106 (TTAS). Residue aspartate 108 coordinates substrate. Serine 112 lines the NAD(+) pocket. Aspartate 151 provides a ligand contact to substrate. Aspartate 151 and histidine 232 together coordinate Zn(2+). Substrate is bound at residue histidine 236. A Zn(2+)-binding site is contributed by histidine 253.

Belongs to the glycerol-1-phosphate dehydrogenase family. Zn(2+) serves as cofactor.

The protein localises to the cytoplasm. It catalyses the reaction sn-glycerol 1-phosphate + NAD(+) = dihydroxyacetone phosphate + NADH + H(+). The enzyme catalyses sn-glycerol 1-phosphate + NADP(+) = dihydroxyacetone phosphate + NADPH + H(+). It participates in membrane lipid metabolism; glycerophospholipid metabolism. In terms of biological role, catalyzes the NAD(P)H-dependent reduction of dihydroxyacetonephosphate (DHAP or glycerone phosphate) to glycerol 1-phosphate (G1P). The G1P thus generated is used as the glycerophosphate backbone of phospholipids in the cellular membranes of Archaea. This Methanococcus aeolicus (strain ATCC BAA-1280 / DSM 17508 / OCM 812 / Nankai-3) protein is Glycerol-1-phosphate dehydrogenase [NAD(P)+].